Reading from the N-terminus, the 455-residue chain is Kynurenine 3-monooxygenase (455 aa).

This sequence belongs to the aromatic-ring hydroxylase family. KMO subfamily. FAD is required as a cofactor.

It catalyses the reaction L-kynurenine + NADPH + O2 + H(+) = 3-hydroxy-L-kynurenine + NADP(+) + H2O. It functions in the pathway cofactor biosynthesis; NAD(+) biosynthesis; quinolinate from L-kynurenine: step 1/3. Functionally, catalyzes the hydroxylation of L-kynurenine (L-Kyn) to form 3-hydroxy-L-kynurenine (L-3OHKyn). Required for synthesis of quinolinic acid. In Xanthomonas oryzae pv. oryzae (strain PXO99A), this protein is Kynurenine 3-monooxygenase.